Consider the following 46-residue polypeptide: Ligatoxin-B (46 aa).

3 cysteine pairs are disulfide-bonded: cysteine 3/cysteine 40, cysteine 4/cysteine 32, and cysteine 16/cysteine 26.

This sequence belongs to the plant thionin (TC 1.C.44) family.

Its subcellular location is the secreted. Its function is as follows. Thionins are small plant proteins which are toxic to animal cells. They seem to exert their toxic effect at the level of the cell membrane. Their precise function is not known. The chain is Ligatoxin-B from Phoradendron liga (Argentine mistletoe).